We begin with the raw amino-acid sequence, 204 residues long: MEYDIKTLDNGSAGSVALPEEIFAVTPRSDIMARVVHWQLAKRRAGTHRTKGMGEISGTTKKPYRQKGTGSARQGSLRAPQFRTGGVVHGPVVRDHGYDLPKKVRRLGLICALSQKAAEGKLIVLDAANGVTKTREAAAKIKALGWTSALIVDGAVDEQFARAIANLPKIDVLPTIGANVYDILNHDVLVITRAGLEGLKERLA.

Residues arginine 44–serine 76 form a disordered region.

This sequence belongs to the universal ribosomal protein uL4 family. In terms of assembly, part of the 50S ribosomal subunit.

One of the primary rRNA binding proteins, this protein initially binds near the 5'-end of the 23S rRNA. It is important during the early stages of 50S assembly. It makes multiple contacts with different domains of the 23S rRNA in the assembled 50S subunit and ribosome. Functionally, forms part of the polypeptide exit tunnel. The polypeptide is Large ribosomal subunit protein uL4 (Gluconobacter oxydans (strain 621H) (Gluconobacter suboxydans)).